Consider the following 223-residue polypeptide: ATP-dependent Clp protease proteolytic subunit 2 (223 aa).

Residues 1-40 (MHAGSGNDMDITRMTPTRLDDEPDAPEPETREDDNKTLNS) form a disordered region. The segment covering 21 to 32 (DEPDAPEPETRE) has biased composition (acidic residues). The active-site Nucleophile is Ser124. His149 is a catalytic residue.

Belongs to the peptidase S14 family. In terms of assembly, fourteen ClpP subunits assemble into 2 heptameric rings which stack back to back to give a disk-like structure with a central cavity, resembling the structure of eukaryotic proteasomes.

The protein localises to the cytoplasm. The enzyme catalyses Hydrolysis of proteins to small peptides in the presence of ATP and magnesium. alpha-casein is the usual test substrate. In the absence of ATP, only oligopeptides shorter than five residues are hydrolyzed (such as succinyl-Leu-Tyr-|-NHMec, and Leu-Tyr-Leu-|-Tyr-Trp, in which cleavage of the -Tyr-|-Leu- and -Tyr-|-Trp bonds also occurs).. In terms of biological role, cleaves peptides in various proteins in a process that requires ATP hydrolysis. Has a chymotrypsin-like activity. Plays a major role in the degradation of misfolded proteins. The protein is ATP-dependent Clp protease proteolytic subunit 2 of Gluconobacter oxydans (strain 621H) (Gluconobacter suboxydans).